The following is a 935-amino-acid chain: Ribonuclease E (935 aa).

The 81-residue stretch at 39–119 (ANIYKGKITR…GNKGAALTTF (81 aa)) folds into the S1 motif domain. Residues D302 and D345 each coordinate Mg(2+). 2 residues coordinate Zn(2+): C403 and C406. Residues 403-406 (CPRC) form a required for zinc-mediated homotetramerization and catalytic activity region. 2 disordered regions span residues 571 to 669 (TKSE…DLRK) and 698 to 743 (VQNN…KSPM). Composition is skewed to basic and acidic residues over residues 593 to 625 (RSQDRRSSRRPRSENNETERTEEQVRNVRERNQ) and 701 to 719 (NDEKPVHQNQRSERQERQR). The span at 720–734 (RTPRHLRAANNQRRR) shows a compositional bias: basic residues.

Belongs to the RNase E/G family. RNase E subfamily. In terms of assembly, component of the RNA degradosome, which is a multiprotein complex involved in RNA processing and mRNA degradation. Within the RNA degradosome, RNase E assembles into a homotetramer formed by a dimer of dimers. Requires Zn(2+) as cofactor. It depends on Mg(2+) as a cofactor.

It is found in the cytoplasm. The protein localises to the cell inner membrane. The enzyme catalyses Endonucleolytic cleavage of single-stranded RNA in A- and U-rich regions.. Endoribonuclease that plays a central role in RNA processing and decay. Required for the maturation of 5S and 16S rRNAs and the majority of tRNAs. Also involved in the degradation of most mRNAs. This is Ribonuclease E from Haemophilus influenzae (strain ATCC 51907 / DSM 11121 / KW20 / Rd).